Consider the following 1071-residue polypeptide: SLIT-ROBO Rho GTPase-activating protein 2 (1071 aa).

An F-BAR domain is found at 22–325; that stretch reads KEIRAQLTEQ…AVENLDATSD (304 aa). Residues 181–203 are compositionally biased toward basic and acidic residues; sequence LKEAEKQEEKQIGKSVKQEDRQT. The tract at residues 181–211 is disordered; the sequence is LKEAEKQEEKQIGKSVKQEDRQTPRSPDSTA. Residue Ser206 is modified to Phosphoserine. The stretch at 363 to 401 forms a coiled coil; it reads QSELVQRRQQLQSRLSTLKIENEEVKKTMEATLQTIQDI. Ser427, Ser500, Ser691, Ser695, and Ser724 each carry phosphoserine. The region spanning 489–679 is the Rho-GAP domain; sequence ARRSSTVRKQ…TIIIQHENIF (191 aa). Residues 703–726 are disordered; sequence THGETISAEDSTQDVTAEHHTSDD. Residues 728 to 787 enclose the SH3 domain; sequence CEPIEAIAKFDYVGRTARELSFKKGASLLLYQRASDDWWEGRHNGIDGLIPHQYIVVQDT. Disordered stretches follow at residues 794–820 and 835–936; these read RSSPKSEIEVMSEPPEEKVTARTGASC and NKQR…NHRP. Ser795 carries the phosphoserine modification. Composition is skewed to polar residues over residues 857-867, 874-885, and 897-907; these read LGSSLTDSSSP, RPSSQPIMSQNL, and GHGSLNSISRH. A Phosphoserine modification is found at Ser916. A compositionally biased stretch (polar residues) spans 919 to 933; sequence IRKTATAGRSKSFNN. Residue Arg927 is modified to Symmetric dimethylarginine; by PRMT5. Ser930 carries the post-translational modification Phosphoserine. Positions 940–968 form a coiled coil; that stretch reads EVIAQDIEATMNSALNELQELERQSSAKH. A disordered region spans residues 983–1012; the sequence is SPVVAPTSEPSSPLHTQLLKDPEPAFQRSA. Residues Ser990, Ser994, Ser1013, and Ser1027 each carry the phosphoserine modification. The tract at residues 1029–1071 is disordered; the sequence is KMAAPVKPPATRPKPTVFPKTNATSPGVNSSASPQSTDKSCTV. Over residues 1047-1071 the composition is skewed to polar residues; that stretch reads PKTNATSPGVNSSASPQSTDKSCTV.

Homodimer. Forms a heterooligomer with SRGAP1 and SRGAP3 through its F-BAR domain. Interacts (via SH3 domain) with GPHN. Interacts (via SH3 domain) with FMNL1 (activated by RAC1); regulates the actin filament severing activity of FMNL1 and actin dynamics. Interacts (via SH3 domain) with FMNL3. Interacts with RAC1; specifically stimulates RAC1 GTPase activity. Interacts (via F-BAR domain) with HOMER1. Interacts with ROBO1 and ROBO2. Interacts with FASLG. Interacts with PRMT5. Methylation at Arg-927 is required for the stimulation of cell migration, dimerization and localization at the plasma membrane protrusions.

The protein localises to the cell membrane. The protein resides in the cell projection. It is found in the dendritic spine. Its subcellular location is the postsynaptic density. It localises to the postsynaptic cell membrane. The protein localises to the lamellipodium. The protein resides in the cytoplasmic vesicle. It is found in the phagosome. Its subcellular location is the nucleus. It localises to the cytoplasm. The protein localises to the cytosol. In terms of biological role, postsynaptic RAC1 GTPase activating protein (GAP) that plays a key role in neuronal morphogenesis and migration mainly during development of the cerebral cortex. Regulates excitatory and inhibitory synapse maturation and density in cortical pyramidal neurons. SRGAP2/SRGAP2A limits excitatory and inhibitory synapse density through its RAC1-specific GTPase activating activity, while it promotes maturation of both excitatory and inhibitory synapses through its ability to bind to the postsynaptic scaffolding protein HOMER1 at excitatory synapses, and the postsynaptic protein GPHN at inhibitory synapses. Mechanistically, acts by binding and deforming membranes, thereby regulating actin dynamics to regulate cell migration and differentiation. Promotes cell repulsion and contact inhibition of locomotion: localizes to protrusions with curved edges and controls the duration of RAC1 activity in contact protrusions. In non-neuronal cells, may also play a role in cell migration by regulating the formation of lamellipodia and filopodia. The protein is SLIT-ROBO Rho GTPase-activating protein 2 of Rattus norvegicus (Rat).